A 596-amino-acid chain; its full sequence is Ubiquilin-4 (596 aa).

One can recognise a Ubiquitin-like domain in the interval 13–87 (IRVTVKTPKD…VHLVIKTPQK (75 aa)). Glycyl lysine isopeptide (Lys-Gly) (interchain with G-Cter in SUMO2) cross-links involve residues Lys23 and Lys62. Residues 89–148 (QDPVTAAASPPSTPDSASAPSTTPASPAAAPVQPCSSGNTTSDAGSGGGPSPVAAEGPSS) form a disordered region. 2 stretches are compositionally biased toward low complexity: residues 93–119 (TAAA…AAAP) and 139–148 (SPVAAEGPSS). The residue at position 139 (Ser139) is a Phosphoserine. 2 consecutive STI1 domains span residues 187-224 (NPEM…QQLM) and 225-256 (ERNP…MQEM). At Thr282 the chain carries Phosphothreonine. Residues 297–361 (GNNPFSSLAG…QVHPTVSNPF (65 aa)) are disordered. A compositionally biased stretch (low complexity) spans 302–313 (SSLAGNSDNSSS). Ser313 carries the post-translational modification Phosphoserine. The span at 324-335 (LPNPWSPSPPTS) shows a compositional bias: pro residues. Residues 339-349 (GSGGEGTGGSG) are compositionally biased toward gly residues. Residues 352 to 361 (QVHPTVSNPF) show a composition bias toward polar residues. STI1 domains lie at 388–435 (NPQL…QEQL) and 439–471 (LPVF…QQGL). The segment at 482–528 (VPSLGSFGTPRTSVPLAGSNSGSSAEAPTSSPGVPATSPPSAGSNAQ) is disordered. Residues 499-513 (GSNSGSSAEAPTSSP) are compositionally biased toward polar residues. A UBA domain is found at 548-593 (PMPEVRFQQQLEQLNSMGFINREANLQALIATGGDINAAIERLLGS).

Homooligomer. Binds signal sequences of proteins that are targeted to the endoplasmic reticulum. Interacts (via UBA domain) with GJA1 (not ubiquitinated) and with ubiquitin; both compete for the same binding site. Interacts (via UBA domain) with ubiquitin and with polyubiquitin chains. Interacts (via ubiquitin-like domain) with PSMD2 and PSMD4, regulatory subunits of the 26S proteasome. Interacts with ATXN1/SCA1; interaction with ATXN1 inhibits polyubiquitination of UBQLN4 and interferes with PSMD4 binding. Interacts with HERPUD1. Interacts (via ubiquitin-like domain) with UBQLN1 (via UBA domain). Interacts with UBQLN2. Interacts (via STI1 1 and 2 domains) with MAP1LC3A/B/C. Interacts with BAG6. Interacts with MRE11 (when ubiquitinated); interaction with ubiquitinated MRE11 leads to MRE11 removal from chromatin. Interacts with DESI1/POST; leading to nuclear export. Interacts with BCL2A1 and BCL2L10. Phosphorylated by ATM at Ser-313 in response to DNA damage, leading to localization in the nucleus and recruitment to sites of DNA damage. In terms of processing, ubiquitinated; this does not lead to proteasomal degradation. May undergo both 'Lys-48'- and 'Lys-63'-linked polyubiquitination. Detected in testis, ovary, thyroid, kidney, thymus, heart, liver, lung and spleen (at protein level). Highly expressed in heart, skeletal muscle, kidney, liver and brain. Detected at lower levels in testis, lung and spleen.

It localises to the nucleus. The protein resides in the cytoplasm. Its subcellular location is the chromosome. It is found in the endoplasmic reticulum. The protein localises to the perinuclear region. It localises to the cytoplasmic vesicle. The protein resides in the autophagosome. Functionally, regulator of protein degradation that mediates the proteasomal targeting of misfolded, mislocalized or accumulated proteins. Acts by binding polyubiquitin chains of target proteins via its UBA domain and by interacting with subunits of the proteasome via its ubiquitin-like domain. Key regulator of DNA repair that represses homologous recombination repair: in response to DNA damage, recruited to sites of DNA damage following phosphorylation by ATM and acts by binding and removing ubiquitinated MRE11 from damaged chromatin, leading to MRE11 degradation by the proteasome. MRE11 degradation prevents homologous recombination repair, redirecting double-strand break repair toward non-homologous end joining (NHEJ). Specifically recognizes and binds mislocalized transmembrane-containing proteins and targets them to proteasomal degradation. Collaborates with DESI1/POST in the export of ubiquitinated proteins from the nucleus to the cytoplasm. Plays a role in the regulation of the proteasomal degradation of non-ubiquitinated GJA1. Acts as an adapter protein that recruits UBQLN1 to the autophagy machinery. Mediates the association of UBQLN1 with autophagosomes and the autophagy-related protein LC3 (MAP1LC3A/B/C) and may assist in the maturation of autophagosomes to autolysosomes by mediating autophagosome-lysosome fusion. The protein is Ubiquilin-4 of Mus musculus (Mouse).